Consider the following 460-residue polypeptide: C4-dicarboxylate transport protein (460 aa).

8 helical membrane-spanning segments follow: residues 21 to 38 (LYFQ…IGHF), 53 to 75 (FIKL…GIAG), 88 to 110 (YALL…VVNV), 153 to 175 (IVGA…FGFA), 196 to 218 (VMFN…AMAF), 231 to 253 (LGQL…LGSI), 301 to 323 (VVGL…YLTM), and 363 to 385 (FIVL…ALIL). The disordered stretch occupies residues 438–460 (PEDDLGVAEGPTPANAVNTTKTV).

It belongs to the dicarboxylate/amino acid:cation symporter (DAACS) (TC 2.A.23) family.

The protein resides in the cell inner membrane. Responsible for the transport of dicarboxylates such as succinate, fumarate, and malate from the periplasm across the membrane. The polypeptide is C4-dicarboxylate transport protein (Pseudomonas syringae pv. tomato (strain ATCC BAA-871 / DC3000)).